A 219-amino-acid chain; its full sequence is UPF0502 protein Gura_3445 (219 aa).

The interval 162–181 (AGEPDLPDDTPAPPPEPARQ) is disordered.

This sequence belongs to the UPF0502 family.

This chain is UPF0502 protein Gura_3445, found in Geotalea uraniireducens (strain Rf4) (Geobacter uraniireducens).